A 1083-amino-acid polypeptide reads, in one-letter code: Regulator of the glycerol channel 1 (1083 aa).

Disordered stretches follow at residues 1 to 46 (MSDY…GSSD) and 69 to 89 (LKNEPASGNTQMNGPDGKENK). Positions 13 to 31 (GGISKQPATPGSTRSSSRN) are enriched in polar residues. A phosphoserine mark is found at serine 136, serine 249, serine 252, serine 481, and serine 537. Residues 495–606 (CIRVGYLLKK…DCSLKDSTDS (112 aa)) enclose the PH domain. Positions 534–582 (DSKSPRSKNKPVVEQSDISRVNKDGTNAGSHPSSKGTQDPKLTKRRKGL) are disordered. The segment covering 549-570 (SDISRVNKDGTNAGSHPSSKGT) has biased composition (polar residues). Phosphoserine occurs at positions 652, 765, and 813. 2 positions are modified to phosphothreonine: threonine 817 and threonine 857. Residues serine 866, serine 879, serine 918, serine 966, serine 969, and serine 975 each carry the phosphoserine modification. The disordered stretch occupies residues 979-1083 (EENRTQNCSG…TVPATSASSK (105 aa)). Composition is skewed to polar residues over residues 983–992 (TQNCSGSRKS), 1043–1061 (LKKTYSAENVPLTSTVSND), and 1071–1083 (STNTVPATSASSK). Phosphoserine is present on residues serine 1059, serine 1081, and serine 1082.

This sequence belongs to the RGC1 family.

Its subcellular location is the cytoplasm. Its function is as follows. Positive regulator of FPS1 glycerol channel required for the glycerol efflux. The chain is Regulator of the glycerol channel 1 (RGC1) from Saccharomyces cerevisiae (strain ATCC 204508 / S288c) (Baker's yeast).